Reading from the N-terminus, the 396-residue chain is Ornithine aminotransferase (396 aa).

Lys255 bears the N6-(pyridoxal phosphate)lysine mark.

The protein belongs to the class-III pyridoxal-phosphate-dependent aminotransferase family. OAT subfamily. Pyridoxal 5'-phosphate is required as a cofactor.

It is found in the cytoplasm. It catalyses the reaction a 2-oxocarboxylate + L-ornithine = L-glutamate 5-semialdehyde + an L-alpha-amino acid. It functions in the pathway amino-acid biosynthesis; L-proline biosynthesis; L-glutamate 5-semialdehyde from L-ornithine: step 1/1. Its function is as follows. Catalyzes the interconversion of ornithine to glutamate semialdehyde. The polypeptide is Ornithine aminotransferase (Staphylococcus carnosus (strain TM300)).